The sequence spans 288 residues: Polyamine aminopropyltransferase (288 aa).

In terms of domain architecture, PABS spans serine 9–methionine 242. Glutamine 36 contributes to the S-methyl-5'-thioadenosine binding site. Histidine 67 and aspartate 91 together coordinate spermidine. S-methyl-5'-thioadenosine-binding positions include glutamate 111 and asparagine 143–glycine 144. Catalysis depends on aspartate 162, which acts as the Proton acceptor. Proline 169 serves as a coordination point for S-methyl-5'-thioadenosine.

It belongs to the spermidine/spermine synthase family. As to quaternary structure, homodimer or homotetramer.

The protein resides in the cytoplasm. The enzyme catalyses S-adenosyl 3-(methylsulfanyl)propylamine + putrescine = S-methyl-5'-thioadenosine + spermidine + H(+). The protein operates within amine and polyamine biosynthesis; spermidine biosynthesis; spermidine from putrescine: step 1/1. Functionally, catalyzes the irreversible transfer of a propylamine group from the amino donor S-adenosylmethioninamine (decarboxy-AdoMet) to putrescine (1,4-diaminobutane) to yield spermidine. This chain is Polyamine aminopropyltransferase, found in Prochlorococcus marinus (strain NATL2A).